Consider the following 277-residue polypeptide: MWGKILGAFFGFLLGGPFGLLLGLFLGHKFDKARRNVYRGGGFGGFGTNRANSEERQAEFFYAGFAVMGHMAKAKGHVTEEEIRVASAIMDRMNLHGEARRQAQNAFREGKEDGFPLEETLAKVRQNCAGRADLLQFFLELQIQAAFADGSLHQNERQLLHVIARSLGFSERQLEQRLHMQEAAFRFQQGGFNQQHGGGFNQAPTRDQLADAYEVLGVTESATSQEVKRAYRKQMNEHHPDKLAAKGLPPEMMEIANQKAQELQAAYDMIRKEKGFK.

The Periplasmic segment spans residues 1 to 4 (MWGK). The helical transmembrane segment at 5-28 (ILGAFFGFLLGGPFGLLLGLFLGH) threads the bilayer. Over 29-277 (KFDKARRNVY…DMIRKEKGFK (249 aa)) the chain is Cytoplasmic. A J domain is found at 211-277 (DAYEVLGVTE…DMIRKEKGFK (67 aa)).

As to quaternary structure, homodimer.

The protein resides in the cell inner membrane. Regulatory DnaK co-chaperone. Direct interaction between DnaK and DjlA is needed for the induction of the wcaABCDE operon, involved in the synthesis of a colanic acid polysaccharide capsule, possibly through activation of the RcsB/RcsC phosphotransfer signaling pathway. The colanic acid capsule may help the bacterium survive conditions outside the host. This Photobacterium profundum (strain SS9) protein is Co-chaperone protein DjlA.